Consider the following 267-residue polypeptide: Tetrahydromethanopterin S-methyltransferase subunit C (267 aa).

Transmembrane regions (helical) follow at residues 18 to 38 (LMAL…VNPV), 39 to 59 (IGPV…ADAI), 76 to 96 (YMSV…VFVV), 99 to 119 (IAVP…VAVL), 138 to 158 (ISGA…GSYT), 163 to 183 (LTSV…TMAI), 209 to 229 (FISM…WWLV), and 230 to 250 (SLIG…ASFE).

This sequence belongs to the MtrC family. The complex is composed of 8 subunits; MtrA, MtrB, MtrC, MtrD, MtrE, MtrF, MtrG and MtrH.

It localises to the cell membrane. It carries out the reaction 5-methyl-5,6,7,8-tetrahydromethanopterin + coenzyme M + 2 Na(+)(in) = 5,6,7,8-tetrahydromethanopterin + methyl-coenzyme M + 2 Na(+)(out). It participates in one-carbon metabolism; methanogenesis from CO(2); methyl-coenzyme M from 5,10-methylene-5,6,7,8-tetrahydromethanopterin: step 2/2. In terms of biological role, part of a complex that catalyzes the formation of methyl-coenzyme M and tetrahydromethanopterin from coenzyme M and methyl-tetrahydromethanopterin. This is an energy-conserving, sodium-ion translocating step. The protein is Tetrahydromethanopterin S-methyltransferase subunit C of Methanothermobacter marburgensis (strain ATCC BAA-927 / DSM 2133 / JCM 14651 / NBRC 100331 / OCM 82 / Marburg) (Methanobacterium thermoautotrophicum).